Here is a 267-residue protein sequence, read N- to C-terminus: Indole-3-glycerol phosphate synthase (267 aa).

The protein belongs to the TrpC family.

It carries out the reaction 1-(2-carboxyphenylamino)-1-deoxy-D-ribulose 5-phosphate + H(+) = (1S,2R)-1-C-(indol-3-yl)glycerol 3-phosphate + CO2 + H2O. Its pathway is amino-acid biosynthesis; L-tryptophan biosynthesis; L-tryptophan from chorismate: step 4/5. The polypeptide is Indole-3-glycerol phosphate synthase (Verminephrobacter eiseniae (strain EF01-2)).